A 184-amino-acid chain; its full sequence is Late embryogenesis abundant protein (184 aa).

Positions 49–184 (TGNIAEYPTE…KLPGHHNHHP (136 aa)) are disordered. The segment covering 60 to 86 (PPAGVAAGTGAAATTAAGVTTSETTTG) has biased composition (low complexity). Basic and acidic residues-rich tracts occupy residues 87–98 (QEHHGSLGEHLR) and 122–138 (KDKI…KDEQ). Positions 139 to 159 (TPTTATTTGPTTTTTTTGAAA) are enriched in low complexity. Positions 160–177 (DQHHEKKGILEKIKEKLP) are enriched in basic and acidic residues.

It belongs to the plant dehydrin family.

Its function is as follows. LEA protein are late embryogenesis abundant in higher plant seed embryos. There are two subsets of LEA proteins (5a, and 5b), the first ones are expressed when the cotyledon weight reach 80 mg and the second set are expressed above 100 mg. The function of those proteins is not known. The protein is Late embryogenesis abundant protein of Raphanus sativus (Radish).